Reading from the N-terminus, the 639-residue chain is tRNA uridine 5-carboxymethylaminomethyl modification enzyme MnmG (639 aa).

Position 15 to 20 (15 to 20 (GAGHAG)) interacts with FAD. Position 276–290 (276–290 (GPRYCPSIEDKIVRF)) interacts with NAD(+).

This sequence belongs to the MnmG family. Homodimer. Heterotetramer of two MnmE and two MnmG subunits. It depends on FAD as a cofactor.

The protein resides in the cytoplasm. Its function is as follows. NAD-binding protein involved in the addition of a carboxymethylaminomethyl (cmnm) group at the wobble position (U34) of certain tRNAs, forming tRNA-cmnm(5)s(2)U34. The polypeptide is tRNA uridine 5-carboxymethylaminomethyl modification enzyme MnmG (Streptococcus gordonii (strain Challis / ATCC 35105 / BCRC 15272 / CH1 / DL1 / V288)).